We begin with the raw amino-acid sequence, 372 residues long: C-X-C chemokine receptor type 5 (372 aa).

Over 1–55 (MNYPLTLEMDLENLEDLFWELDRLDNYNDTSLVENHLCPATEGPLMASFKAVFVP) the chain is Extracellular. A glycan (N-linked (GlcNAc...) asparagine) is linked at N28. The chain crosses the membrane as a helical span at residues 56 to 76 (VAYSLIFLLGVIGNVLVLVIL). At 77–88 (ERHRQTRSSTET) the chain is on the cytoplasmic side. The helical transmembrane segment at 89–109 (FLFHLAVADLLLVFILPFAVA) threads the bilayer. Residues 110–124 (EGSVGWVLGTFLCKT) are Extracellular-facing. A disulfide bridge links C122 with C202. The helical transmembrane segment at 125-145 (VIALHKVNFYCSSLLLACIAV) threads the bilayer. At 146-167 (DRYLAIVHAVHAYRHRRLLSIH) the chain is on the cytoplasmic side. Residues 168–188 (ITCGTIWLVGFLLALPEILFA) form a helical membrane-spanning segment. Topologically, residues 189-219 (KVSQGHHNNSLPRCTFSQENQAETHAWFTSR) are extracellular. N-linked (GlcNAc...) asparagine glycosylation is present at N196. Residues 220–240 (FLYHVAGFLLPMLVMGWCYVG) form a helical membrane-spanning segment. Residues 241–259 (VVHRLRQAQRRPQRQKAVR) lie on the Cytoplasmic side of the membrane. The chain crosses the membrane as a helical span at residues 260–280 (VAILVTSIFFLCWSPYHIVIF). At 281–304 (LDTLARLKAVDNTCKLNGSLPVAI) the chain is on the extracellular side. A helical membrane pass occupies residues 305 to 325 (TMCEFLGLAHCCLNPMLYTFA). Over 326-372 (GVKFRSDLSRLLTKLGCTGPASLCQLFPSWRRSSLSESENATSLTTF) the chain is Cytoplasmic.

This sequence belongs to the G-protein coupled receptor 1 family. Expression in mature B-cells and Burkitt lymphoma cells.

It localises to the cell membrane. Functionally, cytokine receptor that binds to B-lymphocyte chemoattractant (BLC). Involved in B-cell migration into B-cell follicles of spleen and Peyer patches but not into those of mesenteric or peripheral lymph nodes. May have a regulatory function in Burkitt lymphoma (BL) lymphomagenesis and/or B-cell differentiation. The polypeptide is C-X-C chemokine receptor type 5 (CXCR5) (Homo sapiens (Human)).